The chain runs to 286 residues: Alpha-ketoglutarate-dependent dioxygenase alkB homolog 3 (286 aa).

The tract at residues 21–45 (QAIAQPATTAKSHLHQKPGQTWKNK) is disordered. Polar residues predominate over residues 22–31 (AIAQPATTAK). Substrate contacts are provided by residues tryptophan 115 and 141–143 (YTY). Residues 172-278 (TFNSLLCNLY…RVNLTFRTVY (107 aa)) form the Fe2OG dioxygenase domain. Position 177 is a (4R)-5-hydroxyleucine; alternate (leucine 177). A (4R)-5-oxoleucine; alternate modification is found at leucine 177. 179–181 (NLY) serves as a coordination point for 2-oxoglutarate. Residues histidine 191 and aspartate 193 each contribute to the Fe cation site. Aspartate 194 is a binding site for substrate. Position 257 (histidine 257) interacts with Fe cation. 2-oxoglutarate is bound by residues 269 to 275 (RVNLTFR) and arginine 275.

The protein belongs to the alkB family. In terms of assembly, interacts with the ASCC complex composed of ASCC1, ASCC2 and ASCC3. Interacts directly with ASCC3, and is thereby recruited to the ASCC complex. Interacts with OTUD4; the interaction is direct. Interacts with USP7 and USP9X. Fe(2+) serves as cofactor. In terms of processing, ubiquitinated; undergoes 'Lys-48'-linked polyubiquitination. OTUD4 promotes USP7 and USP9X-dependent deubiquitination of 'Lys-48'-polyubiquitinated ALKBH3 promoting the repair of alkylated DNA lesions. Ubiquitous. Detected in heart, pancreas, skeletal muscle, thymus, testis, ovary, spleen, prostate, small intestine, peripheral blood leukocytes, urinary bladder and colon.

Its subcellular location is the nucleus. The protein localises to the cytoplasm. The enzyme catalyses an N(1)-methyladenosine in mRNA + 2-oxoglutarate + O2 = an adenosine in mRNA + formaldehyde + succinate + CO2. The catalysed reaction is a methylated nucleobase within DNA + 2-oxoglutarate + O2 = a nucleobase within DNA + formaldehyde + succinate + CO2. It carries out the reaction an N(1)-methyl-2'-deoxyadenosine in single-stranded DNA + 2-oxoglutarate + O2 = a 2'-deoxyadenosine in single-stranded DNA + formaldehyde + succinate + CO2 + H(+). It catalyses the reaction an N(3)-methyl-2'-deoxycytidine in single-stranded DNA + 2-oxoglutarate + O2 = a 2'-deoxycytidine in single-stranded DNA + formaldehyde + succinate + CO2 + H(+). The enzyme catalyses a 3,N(4)-etheno-2'-deoxycytidine in single-stranded DNA + 2-oxoglutarate + O2 + H2O = a 2'-deoxycytidine in single-stranded DNA + glyoxal + succinate + CO2. With respect to regulation, activated by ascorbate. Functionally, dioxygenase that mediates demethylation of DNA and RNA containing 1-methyladenosine (m1A). Repairs alkylated DNA containing 1-methyladenosine (m1A) and 3-methylcytosine (m3C) by oxidative demethylation. Has a strong preference for single-stranded DNA. Able to process alkylated m3C within double-stranded regions via its interaction with ASCC3, which promotes DNA unwinding to generate single-stranded substrate needed for ALKBH3. Can repair exocyclic 3,N4-ethenocytosine adducs in single-stranded DNA. Also acts on RNA. Demethylates N(1)-methyladenosine (m1A) RNA, an epigenetic internal modification of messenger RNAs (mRNAs) highly enriched within 5'-untranslated regions (UTRs) and in the vicinity of start codons. Requires molecular oxygen, alpha-ketoglutarate and iron. This Homo sapiens (Human) protein is Alpha-ketoglutarate-dependent dioxygenase alkB homolog 3.